Reading from the N-terminus, the 108-residue chain is UPF0060 membrane protein YnfA (108 aa).

Residues 1–5 (MLKTT) lie on the Periplasmic side of the membrane. Residues 6–26 (LLFFVTALCEIIGCFLPWLWI) traverse the membrane as a helical segment. Over 27-30 (KRGA) the chain is Cytoplasmic. A helical membrane pass occupies residues 31 to 51 (SVWWLLPAAASLALFVWLLTL). Over 52–60 (HPAASGRVY) the chain is Periplasmic. The helical transmembrane segment at 61–81 (AAYGGVYVCTALLWLRVVDGV) threads the bilayer. Topologically, residues 82–84 (RLT) are cytoplasmic. The chain crosses the membrane as a helical span at residues 85–105 (VYDWCGALIALCGMLIIVVGW). Topologically, residues 106-108 (GRT) are periplasmic.

Belongs to the UPF0060 family.

Its subcellular location is the cell inner membrane. The protein is UPF0060 membrane protein YnfA of Salmonella paratyphi A (strain ATCC 9150 / SARB42).